Here is a 432-residue protein sequence, read N- to C-terminus: D-amino acid dehydrogenase (432 aa).

Residue 3–17 (VLVLGGGVIGVTSAY) coordinates FAD.

Belongs to the DadA oxidoreductase family. It depends on FAD as a cofactor.

The catalysed reaction is a D-alpha-amino acid + A + H2O = a 2-oxocarboxylate + AH2 + NH4(+). The protein operates within amino-acid degradation; D-alanine degradation; NH(3) and pyruvate from D-alanine: step 1/1. Its function is as follows. Oxidative deamination of D-amino acids. This Delftia acidovorans (strain DSM 14801 / SPH-1) protein is D-amino acid dehydrogenase.